Reading from the N-terminus, the 240-residue chain is UDP-2,3-diacylglucosamine hydrolase (240 aa).

Mn(2+)-binding residues include Asp7, His9, Asp40, Asn78, and His113. 78 to 79 (NR) lines the substrate pocket. Substrate contacts are provided by Asp121, Ser159, Thr163, Lys166, and His194. Positions 194 and 196 each coordinate Mn(2+).

The protein belongs to the LpxH family. It depends on Mn(2+) as a cofactor.

The protein resides in the cell inner membrane. The enzyme catalyses UDP-2-N,3-O-bis[(3R)-3-hydroxytetradecanoyl]-alpha-D-glucosamine + H2O = 2-N,3-O-bis[(3R)-3-hydroxytetradecanoyl]-alpha-D-glucosaminyl 1-phosphate + UMP + 2 H(+). It functions in the pathway glycolipid biosynthesis; lipid IV(A) biosynthesis; lipid IV(A) from (3R)-3-hydroxytetradecanoyl-[acyl-carrier-protein] and UDP-N-acetyl-alpha-D-glucosamine: step 4/6. Its function is as follows. Hydrolyzes the pyrophosphate bond of UDP-2,3-diacylglucosamine to yield 2,3-diacylglucosamine 1-phosphate (lipid X) and UMP by catalyzing the attack of water at the alpha-P atom. Involved in the biosynthesis of lipid A, a phosphorylated glycolipid that anchors the lipopolysaccharide to the outer membrane of the cell. In Stutzerimonas stutzeri (strain A1501) (Pseudomonas stutzeri), this protein is UDP-2,3-diacylglucosamine hydrolase.